The primary structure comprises 332 residues: GTPase Obg (332 aa).

The region spanning 1–159 is the Obg domain; the sequence is MKFLDQAKIY…RWVWLRLKLI (159 aa). The region spanning 160 to 328 is the OBG-type G domain; the sequence is ADAGLVGLPN…VLRETLRMIR (169 aa). GTP-binding positions include 166–173, 191–195, 213–216, 280–283, and 309–311; these read GLPNAGKS, FTTLH, DIPG, NKMD, and SAA. Residues Ser173 and Thr193 each coordinate Mg(2+).

This sequence belongs to the TRAFAC class OBG-HflX-like GTPase superfamily. OBG GTPase family. In terms of assembly, monomer. Mg(2+) serves as cofactor.

It localises to the cytoplasm. An essential GTPase which binds GTP, GDP and possibly (p)ppGpp with moderate affinity, with high nucleotide exchange rates and a fairly low GTP hydrolysis rate. Plays a role in control of the cell cycle, stress response, ribosome biogenesis and in those bacteria that undergo differentiation, in morphogenesis control. This chain is GTPase Obg, found in Acidiphilium cryptum (strain JF-5).